Consider the following 208-residue polypeptide: MARYRGAVERLERRFGVSLALKGERRLSGKSALDKRAYGPGQHGQRRAKTSDYGLQLKEKQKAKMMYGISEKQFRSIFVEANRLDGNTGENLIRLIERRLDNVVYRMGFATTRSSARQLVTHGHVLVDGKRLDIPSYFVRSGQKIEIKEKTKSNPQVVRAMELTAQTGIVPWIDVEKDKKYGIFTRYPEREEVVVPIEERLIVELYSK.

Residues 98–161 form the S4 RNA-binding domain; sequence RRLDNVVYRM…KSNPQVVRAM (64 aa).

The protein belongs to the universal ribosomal protein uS4 family. Part of the 30S ribosomal subunit. Contacts protein S5. The interaction surface between S4 and S5 is involved in control of translational fidelity.

One of the primary rRNA binding proteins, it binds directly to 16S rRNA where it nucleates assembly of the body of the 30S subunit. Its function is as follows. With S5 and S12 plays an important role in translational accuracy. The chain is Small ribosomal subunit protein uS4 from Helicobacter acinonychis (strain Sheeba).